Consider the following 176-residue polypeptide: dCTP deaminase (176 aa).

DCTP is bound by residues 102–107 and D118; that span reads RSTFAR. E128 serves as the catalytic Proton donor/acceptor. 2 residues coordinate dCTP: Y160 and Q167.

Belongs to the dCTP deaminase family. As to quaternary structure, homotrimer.

It catalyses the reaction dCTP + H2O + H(+) = dUTP + NH4(+). The protein operates within pyrimidine metabolism; dUMP biosynthesis; dUMP from dCTP (dUTP route): step 1/2. Its function is as follows. Catalyzes the deamination of dCTP to dUTP. This is dCTP deaminase from Hyperthermus butylicus (strain DSM 5456 / JCM 9403 / PLM1-5).